A 264-amino-acid chain; its full sequence is MAVGKNKRLTKGGKKGAKKKVVDPFSKKDWYDVKAPAMFNIRNIGKTLVTRTQGTKIASDGLKGRVFEVSLADLQNDEVAFRKFKLITEDVQGKNCLTNFHGMDLTRDKMFSMVKKWQTMIEAHVDVKTTDGYLLRLFCVGFTKKRNNQIRKTSYAQHQQVRQIRKKMMEIMTGEFQTNDLKEVVNKLIPDSIGKDIEKACQSIYPLHDVYVRKVKMLKKPKFELGKLMELHGEGGGAGKPSGDEAGAKVERADGYEPPVQESV.

The interval 233–264 (GEGGGAGKPSGDEAGAKVERADGYEPPVQESV) is disordered. Basic and acidic residues predominate over residues 242 to 255 (SGDEAGAKVERADG).

It belongs to the eukaryotic ribosomal protein eS1 family. As to quaternary structure, component of the small ribosomal subunit. Mature ribosomes consist of a small (40S) and a large (60S) subunit. The 40S subunit contains about 33 different proteins and 1 molecule of RNA (18S). The 60S subunit contains about 49 different proteins and 3 molecules of RNA (25S, 5.8S and 5S).

The protein localises to the cytoplasm. The polypeptide is Small ribosomal subunit protein eS1 (Eimeria tenella (Coccidian parasite)).